We begin with the raw amino-acid sequence, 185 residues long: Ribosome-recycling factor (185 aa).

It belongs to the RRF family.

It is found in the cytoplasm. In terms of biological role, responsible for the release of ribosomes from messenger RNA at the termination of protein biosynthesis. May increase the efficiency of translation by recycling ribosomes from one round of translation to another. This Shouchella clausii (strain KSM-K16) (Alkalihalobacillus clausii) protein is Ribosome-recycling factor.